Here is a 746-residue protein sequence, read N- to C-terminus: MRREFCWDAYSKAAGSRASSPLPRQDRDSFCHQMSFCLTELHLWSLKNTLHIADRDIGIYQYYDKKDPPATEHGNLEKKQKLAESRDYPWTLKNRRPEKLRDSLKELEELMQNSRCVLSKWKNKYVCQLLFGSGVLVSLSLSGPQLEKVVIDRSLVGKLISDTISDALLTDSFIILSFLAQNKLCFIQFTKKMESSDVNKRLEKLSALDYKIFYYEIPGPINKTTERHLAINCVHDRVVCWWPLVNDDAWPWAPISSEKDRANLLLLGYAQGRLEVLSSVRTEWDPLDVRFGTKQPYQVFTVEHSVSVDKEPMADSCIYECIRNKIQCVSVTRIPLKSKAISCCRNVTEDKLILGCEDSSLILYETHRRVTLLAQTELLPSLISCHPSGAILLVGSNQGELQIFDMALSPINIQLLAEDRLPRETLQFSKLFDASSSLVQMQWIAPQVVSQKGEGSDIYDLLFLRFERGPLGVLLFKLGVFTRGQLGLIDIIFQYIHCDEIYEAINILSSMNWDTLGHQCFISMSAIVNHLLRQKLTPEREAQLETSLGTFYAPTRPLLDSTILEYRDQISKYARRFFHHLLRYQRFEKAFLLAVDVGARDLFMDIHYLALDKGELALAEVARKRASDIDAESITSGVELLGPLDRGDMLNEAFIGLSLAPQGEDSFPDNLPPSCPTHRHILQQRILNGSSNRQIIDRRNELEKDICSGFLMTNTCNAEDGELREDGREQEIRDGGSLKMIHFGLV.

WD repeat units lie at residues 326–374 (IQCV…TLLA) and 375–414 (QTEL…INIQ).

Belongs to the WD repeat fritz family. In terms of assembly, component of the CPLANE (ciliogenesis and planar polarity effectors) complex, composed of INTU, FUZ and WDPCP. Interacts with CPLANE1.

It localises to the cell membrane. The protein localises to the cytoplasm. It is found in the cytoskeleton. The protein resides in the cilium axoneme. Its subcellular location is the cilium basal body. Its function is as follows. Probable effector of the planar cell polarity signaling pathway which regulates the septin cytoskeleton in both ciliogenesis and collective cell movements. Together with FUZ and WDPCP proposed to function as core component of the CPLANE (ciliogenesis and planar polarity effectors) complex involved in the recruitment of peripheral IFT-A proteins to basal bodies. Binds phosphatidylinositol 3-phosphate with highest affinity, followed by phosphatidylinositol 4-phosphate and phosphatidylinositol 5-phosphate. The chain is WD repeat-containing and planar cell polarity effector protein fritz homolog (WDPCP) from Homo sapiens (Human).